Reading from the N-terminus, the 407-residue chain is Complement decay-accelerating factor transmembrane isoform (407 aa).

An N-terminal signal peptide occupies residues 1–39 (MVSSTWGYDPRAGAGDLVITTTAAGAVTIAVLLFQTVCG). Sushi domains lie at 40 to 101 (DCGP…FCEK), 102 to 165 (SCDT…FCKK), 166 to 227 (KSCP…VCTE), and 228 to 291 (IFCP…QCIE). Over 40–368 (DCGPPPDIPN…NSGGDRYIYG (329 aa)) the chain is Extracellular. 8 disulfide bridges follow: Cys-41–Cys-86, Cys-70–Cys-99, Cys-103–Cys-150, Cys-134–Cys-163, Cys-168–Cys-209, Cys-195–Cys-225, Cys-230–Cys-272, and Cys-258–Cys-289. Asn-192 carries an N-linked (GlcNAc...) asparagine glycan. Asn-267 is a glycosylation site (N-linked (GlcNAc...) asparagine). The segment at 301–361 (VVNVPSTGIP…STDKGESNSG (61 aa)) is disordered. Polar residues predominate over residues 306 to 324 (STGIPSTPQKPTTESVPNP). Positions 343–357 (HEPDTTTRTSTDKGE) are enriched in basic and acidic residues. The helical transmembrane segment at 369 to 389 (FVAVIAMIDSLIIVKTLWTIL) threads the bilayer. Residues 390-407 (SPNRRSDFQGKERKDVSK) are Cytoplasmic-facing.

It belongs to the receptors of complement activation (RCA) family. As to expression, testis, spleen and lymph node.

Its subcellular location is the membrane. This protein recognizes C4b and C3b fragments that condense with cell-surface hydroxyl or amino groups when nascent C4b and C3b are locally generated during C4 and c3 activation. Interaction of daf with cell-associated C4b and C3b polypeptides interferes with their ability to catalyze the conversion of C2 and factor B to enzymatically active C2a and Bb and thereby prevents the formation of C4b2a and C3bBb, the amplification convertases of the complement cascade. Inhibits complement activation by destabilizing and preventing the formation of C3 and C5 convertases, which prevents complement damage. In Mus musculus (Mouse), this protein is Complement decay-accelerating factor transmembrane isoform (Cd55b).